The sequence spans 94 residues: Ribonuclease VapC3 (94 aa).

Asp-6 is a Mg(2+) binding site.

This sequence belongs to the PINc/VapC protein family. It depends on Mg(2+) as a cofactor.

Toxic component of a type II toxin-antitoxin (TA) system. An RNase. Its cognate antitoxin is VapB3. This chain is Ribonuclease VapC3 (vapC3), found in Methanocaldococcus jannaschii (strain ATCC 43067 / DSM 2661 / JAL-1 / JCM 10045 / NBRC 100440) (Methanococcus jannaschii).